A 380-amino-acid chain; its full sequence is Cytochrome b (380 aa).

4 helical membrane passes run 34 to 54 (FGSL…LLAT), 78 to 99 (WLIR…YLHI), 114 to 134 (WNTG…GYVL), and 179 to 199 (FFAL…IHLT). Heme b-binding residues include His-84 and His-98. 2 residues coordinate heme b: His-183 and His-197. His-202 provides a ligand contact to a ubiquinone. The next 4 membrane-spanning stretches (helical) occupy residues 227–247 (LKDI…ALFS), 289–309 (LGGV…PLLH), 321–341 (LSQL…WVGS), and 348–368 (FIII…ILFP).

Belongs to the cytochrome b family. The cytochrome bc1 complex contains 11 subunits: 3 respiratory subunits (MT-CYB, CYC1 and UQCRFS1), 2 core proteins (UQCRC1 and UQCRC2) and 6 low-molecular weight proteins (UQCRH/QCR6, UQCRB/QCR7, UQCRQ/QCR8, UQCR10/QCR9, UQCR11/QCR10 and a cleavage product of UQCRFS1). This cytochrome bc1 complex then forms a dimer. Requires heme b as cofactor.

It localises to the mitochondrion inner membrane. Component of the ubiquinol-cytochrome c reductase complex (complex III or cytochrome b-c1 complex) that is part of the mitochondrial respiratory chain. The b-c1 complex mediates electron transfer from ubiquinol to cytochrome c. Contributes to the generation of a proton gradient across the mitochondrial membrane that is then used for ATP synthesis. The sequence is that of Cytochrome b (MT-CYB) from Ciconia ciconia (White stork).